The chain runs to 68 residues: Small cysteine-rich protein 5 (68 aa).

An N-terminal signal peptide occupies residues 1 to 24 (MAVKFHLCLLLIILVGMGAHVAFA).

Belongs to the Cnidaria small cysteine-rich protein (SCRiP) family. gamma subfamily. In terms of processing, contains 4 disulfide bonds.

Its subcellular location is the secreted. It is found in the nematocyst. In terms of biological role, induces neurotoxic symptoms on zebrafish. Has also been claimed to be implied in calcification, but tests on homolog proteins suggest that proteins of this family have a neurotoxic function and not a calcification function. This is Small cysteine-rich protein 5 from Orbicella faveolata (Mountainous star coral).